The primary structure comprises 185 residues: Ribosome-recycling factor (185 aa).

It belongs to the RRF family.

It is found in the cytoplasm. Its function is as follows. Responsible for the release of ribosomes from messenger RNA at the termination of protein biosynthesis. May increase the efficiency of translation by recycling ribosomes from one round of translation to another. The polypeptide is Ribosome-recycling factor (Shewanella frigidimarina (strain NCIMB 400)).